We begin with the raw amino-acid sequence, 582 residues long: ATP-dependent lipid A-core flippase (582 aa).

5 helical membrane passes run 26 to 46 (LIAASVALILNALVDSSLIYL), 68 to 88 (ILVMLFILLRGVSNYIASYCL), 140 to 160 (YVLVTIVREGAYLISLFAVMV), 164 to 184 (WQLSIVLFLLAPIIAFLISIV), and 252 to 272 (GLVQLIASLALSAVLYVATFP). The ABC transmembrane type-1 domain occupies 27–310 (IAASVALILN…LTSVNSQFQR (284 aa)). One can recognise an ABC transporter domain in the interval 342–578 (ITFDNVIFSY…GGAYKQLYSM (237 aa)). 376 to 383 (GRSGSGKS) contacts ATP.

This sequence belongs to the ABC transporter superfamily. Lipid exporter (TC 3.A.1.106) family. As to quaternary structure, homodimer.

It localises to the cell inner membrane. It carries out the reaction ATP + H2O + lipid A-core oligosaccharideSide 1 = ADP + phosphate + lipid A-core oligosaccharideSide 2.. Its function is as follows. Involved in lipopolysaccharide (LPS) biosynthesis. Translocates lipid A-core from the inner to the outer leaflet of the inner membrane. Transmembrane domains (TMD) form a pore in the inner membrane and the ATP-binding domain (NBD) is responsible for energy generation. This chain is ATP-dependent lipid A-core flippase, found in Haemophilus ducreyi (strain 35000HP / ATCC 700724).